Here is a 240-residue protein sequence, read N- to C-terminus: Thymidylate kinase (240 aa).

Residue 10–17 (GINGVGKS) participates in ATP binding.

This sequence belongs to the thymidylate kinase family.

It carries out the reaction dTMP + ATP = dTDP + ADP. Its pathway is pyrimidine metabolism; dTTP biosynthesis. Catalyzes the conversion of dTMP to dTDP. This African swine fever virus (strain Badajoz 1971 Vero-adapted) (Ba71V) protein is Thymidylate kinase (TMK).